The chain runs to 279 residues: Large ribosomal subunit protein uL2 (279 aa).

The disordered stretch occupies residues 223 to 279; the sequence is VAMNPVDHPMGGGEGRSSGGHPRSRKGLYAKGGKTRSANKYSKNMIVKKRVNKRLSK. Basic residues predominate over residues 268-279; it reads IVKKRVNKRLSK.

The protein belongs to the universal ribosomal protein uL2 family. As to quaternary structure, part of the 50S ribosomal subunit. Forms a bridge to the 30S subunit in the 70S ribosome.

In terms of biological role, one of the primary rRNA binding proteins. Required for association of the 30S and 50S subunits to form the 70S ribosome, for tRNA binding and peptide bond formation. It has been suggested to have peptidyltransferase activity; this is somewhat controversial. Makes several contacts with the 16S rRNA in the 70S ribosome. This is Large ribosomal subunit protein uL2 from Cytophaga hutchinsonii (strain ATCC 33406 / DSM 1761 / CIP 103989 / NBRC 15051 / NCIMB 9469 / D465).